A 69-amino-acid chain; its full sequence is Neuropeptide-like protein 30 (69 aa).

The first 22 residues, 1-22 (MISTSSILILVVLLACFMAASA), serve as a signal peptide directing secretion. Tyrosine amide occurs at positions 29, 39, 46, and 53. 2 positions are modified to tryptophan amide: W58 and W67.

It belongs to the YARP (YGGW-amide related peptide) family. As to expression, expressed in hypoderm.

The protein localises to the secreted. Its function is as follows. May have antimicrobial activity. May play a role in response to fungal infection. The chain is Neuropeptide-like protein 30 (nlp-30) from Caenorhabditis elegans.